A 1522-amino-acid polypeptide reads, in one-letter code: Lysine-specific demethylase 5B (1522 aa).

Residues 10-51 enclose the JmjN domain; the sequence is CPVFEPSWEEFADPFAFIHKIRPIAEQTGICKVRPPPDWQPP. The 91-residue stretch at 75-165 folds into the ARID domain; the sequence is TRVKLNFLDQ…ILYPYNLFQS (91 aa). Positions 180–192 are enriched in basic and acidic residues; it reads DTKDKEYKPHDIP. The tract at residues 180 to 229 is disordered; sequence DTKDKEYKPHDIPQRQSVQPSESCPPARRAKRLRAEATNIKTESDSPEVR. The PHD-type 1 zinc finger occupies 284 to 334; the sequence is LYVCLLCGSGNDEDRLLLCDGCDDSYHTFCLIPPLHDVPKGDWRCPQCLAQ. Tyr-400 is a 2-oxoglutarate binding site. A JmjC domain is found at 428-594; it reads EYLDSGWNLN…LGRQCIEHYR (167 aa). Fe cation contacts are provided by His-474 and Glu-476. 3 residues coordinate 2-oxoglutarate: Ser-482, Asn-484, and Lys-492. His-562 lines the Fe cation pocket. The C5HC2 zinc-finger motif lies at 667-719; it reads CYKCKTTCFMSAVYCPCKPGLLVCLYHVEDLCSCPTYQYKLGYRYTLEELYPM. Residues 1151-1199 form a PHD-type 2 zinc finger; sequence LKVCVCQKEPAAPMIQCELCRGFFHTGCVSVPHALQGPRVWLCPQCRRS. Residues 1353–1365 show a composition bias toward polar residues; that stretch reads LQAEQKPSVGPSN. Disordered regions lie at residues 1353-1373 and 1400-1460; these read LQAEQKPSVGPSNEKSECCRG and ARVR…DSED. Residues 1400–1416 show a composition bias toward basic residues; sequence ARVRKMRTPKKKKLKLS. Residues 1426–1442 are compositionally biased toward basic and acidic residues; that stretch reads RMERERERLLEAQRSSE. The segment at 1462–1516 adopts a PHD-type 3 zinc-finger fold; it reads DAICPAVTCLQPEGEEVDWVQCDGSCNQWFHQVCVGISPEMAEKEDYICASCAGK.

Belongs to the JARID1 histone demethylase family. Fe(2+) serves as cofactor.

The protein localises to the nucleus. The enzyme catalyses N(6),N(6),N(6)-trimethyl-L-lysyl(4)-[histone H3] + 3 2-oxoglutarate + 3 O2 = L-lysyl(4)-[histone H3] + 3 formaldehyde + 3 succinate + 3 CO2. Histone demethylase that demethylates 'Lys-4' of histone H3, thereby playing a central role in histone code. Does not demethylate histone H3 'Lys-9' or H3 'Lys-27'. Demethylates trimethylated, dimethylated and monomethylated H3 'Lys-4'. Acts as a transcriptional corepressor. May repress the CLOCK-BMAL1 heterodimer-mediated transcriptional activation of the core clock component PER2. This chain is Lysine-specific demethylase 5B (KDM5B), found in Gallus gallus (Chicken).